The sequence spans 159 residues: Nucleotide-binding protein PST_3153 (159 aa).

This sequence belongs to the YajQ family.

Nucleotide-binding protein. This chain is Nucleotide-binding protein PST_3153, found in Stutzerimonas stutzeri (strain A1501) (Pseudomonas stutzeri).